The following is a 394-amino-acid chain: Elongation factor Tu 1 (394 aa).

The region spanning 10-204 (KPHVNVGTIG…HLDTYIPEPE (195 aa)) is the tr-type G domain. Residues 19–26 (GHVDHGKT) form a G1 region. 19–26 (GHVDHGKT) provides a ligand contact to GTP. Thr-26 contributes to the Mg(2+) binding site. Residues 60–64 (GITIN) are G2. The segment at 81–84 (DCPG) is G3. Residues 81-85 (DCPGH) and 136-139 (NKCD) each bind GTP. Residues 136–139 (NKCD) are G4. A G5 region spans residues 174–176 (SAL).

Belongs to the TRAFAC class translation factor GTPase superfamily. Classic translation factor GTPase family. EF-Tu/EF-1A subfamily. Monomer.

Its subcellular location is the cytoplasm. It catalyses the reaction GTP + H2O = GDP + phosphate + H(+). GTP hydrolase that promotes the GTP-dependent binding of aminoacyl-tRNA to the A-site of ribosomes during protein biosynthesis. The polypeptide is Elongation factor Tu 1 (Haemophilus influenzae (strain 86-028NP)).